The sequence spans 212 residues: ATP phosphoribosyltransferase 2 (212 aa).

It belongs to the ATP phosphoribosyltransferase family. Short subfamily. In terms of assembly, heteromultimer composed of HisG and HisZ subunits.

It localises to the cytoplasm. The catalysed reaction is 1-(5-phospho-beta-D-ribosyl)-ATP + diphosphate = 5-phospho-alpha-D-ribose 1-diphosphate + ATP. It functions in the pathway amino-acid biosynthesis; L-histidine biosynthesis; L-histidine from 5-phospho-alpha-D-ribose 1-diphosphate: step 1/9. Catalyzes the condensation of ATP and 5-phosphoribose 1-diphosphate to form N'-(5'-phosphoribosyl)-ATP (PR-ATP). Has a crucial role in the pathway because the rate of histidine biosynthesis seems to be controlled primarily by regulation of HisG enzymatic activity. The chain is ATP phosphoribosyltransferase 2 (hisG2) from Geobacter sulfurreducens (strain ATCC 51573 / DSM 12127 / PCA).